We begin with the raw amino-acid sequence, 298 residues long: Small ribosomal subunit protein uS2 (298 aa).

The protein belongs to the universal ribosomal protein uS2 family.

The sequence is that of Small ribosomal subunit protein uS2 from Leifsonia xyli subsp. xyli (strain CTCB07).